Reading from the N-terminus, the 99-residue chain is Small ribosomal subunit protein bS20 (99 aa).

This sequence belongs to the bacterial ribosomal protein bS20 family.

In terms of biological role, binds directly to 16S ribosomal RNA. The protein is Small ribosomal subunit protein bS20 of Picosynechococcus sp. (strain ATCC 27264 / PCC 7002 / PR-6) (Agmenellum quadruplicatum).